A 2153-amino-acid polypeptide reads, in one-letter code: Non-reducing polyketide synthase albA (2153 aa).

Positions 8–244 (YLFGDQTSDI…VKAPIHGPYH (237 aa)) are N-terminal acylcarrier protein transacylase domain (SAT). The Ketosynthase family 3 (KS3) domain occupies 375-806 (NSKIAIIGMS…GGNTALLLED (432 aa)). Active-site for beta-ketoacyl synthase activity residues include C547, H682, and H724. Residues 912–1232 (FVFTGQGAQY…LASLHLAGID (321 aa)) form a malonyl-CoA:ACP transacylase (MAT) domain region. The active-site For acyl/malonyl transferase activity is the S1001. Positions 1286–1425 (HEYLTTAAQK…CTVRFFDCAA (140 aa)) are N-terminal hotdog fold. The 313-residue stretch at 1286–1598 (HEYLTTAAQK…FQALSRKILD (313 aa)) folds into the PKS/mFAS DH domain. Positions 1290–1603 (TTAAQKVIET…RKILDTVLPP (314 aa)) are product template (PT) domain. H1326 (proton acceptor; for dehydratase activity) is an active-site residue. The C-terminal hotdog fold stretch occupies residues 1452–1598 (DAHRLGRGMV…FQALSRKILD (147 aa)). D1511 acts as the Proton donor; for dehydratase activity in catalysis. The disordered stretch occupies residues 1608–1643 (KGPARPAASAQKAAPAAAASKSRASAPAPAKPAAKP). The span at 1610–1643 (PARPAASAQKAAPAAAASKSRASAPAPAKPAAKP) shows a compositional bias: low complexity. In terms of domain architecture, Carrier 1 spans 1643 to 1720 (PSAPSLVKRA…DFKQFLAPMS (78 aa)). An O-(pantetheine 4'-phosphoryl)serine modification is found at S1680. The tract at residues 1720–1765 (SQGEASDGSTSDPESSSSFNGGSSTDESSAGSPVSSPPNEKVTQVE) is disordered. Residues 1725-1748 (SDGSTSDPESSSSFNGGSSTDESS) are compositionally biased toward low complexity. The span at 1749–1765 (AGSPVSSPPNEKVTQVE) shows a compositional bias: polar residues. The Carrier 2 domain occupies 1764 to 1841 (VEQHATIKEI…DVEDALGLKP (78 aa)). Position 1801 is an O-(pantetheine 4'-phosphoryl)serine (S1801). The interval 1879 to 2151 (SPHPRSTSIL…ELGSFIGNAM (273 aa)) is claisen cyclase domain. The active-site For Claisen cyclase activity is the S1969.

The enzyme catalyses 6 malonyl-CoA + acetyl-CoA + 6 H(+) = naphtopyrone YWA1 + 6 CO2 + 7 CoA + H2O. It functions in the pathway secondary metabolite biosynthesis. Its function is as follows. Non-reducing polyketide synthase; part of the gene cluster that mediates the biosynthesis of aurasperone B, a dimeric gamma-naphthopyrone. The first step in the biosynthesis of aurasperone B is the production of gamma-naphthopyrone precursor YWA1 by the non-reducing polyketide synthase albA, via condensation of one acetyl-CoA starter unit with 6 malonyl-CoA units. YWA1 is then methylated by aunE at position C-6 to yield foncesin which is further methylated at position C-8 by aunD to produce fonsecin B. A key enzyme in the biosynthetic pathway is the cytochrome P450 monooxygenase aunB which catalyzes the oxidative dimerization of fonsecin B to aurasperone B. AunB also catalyzes the oxidative dimerization of rubrofusarin B into aurasperone A. This chain is Non-reducing polyketide synthase albA, found in Aspergillus niger (strain ATCC MYA-4892 / CBS 513.88 / FGSC A1513).